Here is a 1382-residue protein sequence, read N- to C-terminus: Hepatocyte growth factor receptor (1382 aa).

The signal sequence occupies residues 1-24 (MKASAVLAPGILVILFTLVQKSNC). Residues 25 to 933 (ECKEALVKSK…VIVQPDQNIT (909 aa)) are Extracellular-facing. A Sema domain is found at 27–516 (KEALVKSKMN…TGKKITKIPL (490 aa)). A glycan (N-linked (GlcNAc...) asparagine) is linked at Asn45. 4 disulfides stabilise this stretch: Cys95-Cys101, Cys98-Cys160, Cys133-Cys141, and Cys173-Cys176. An N-linked (GlcNAc...) asparagine glycan is attached at Asn106. N-linked (GlcNAc...) asparagine glycans are attached at residues Asn203 and Asn359. Intrachain disulfides connect Cys299–Cys364 and Cys386–Cys398. 2 N-linked (GlcNAc...) asparagine glycosylation sites follow: Asn400 and Asn406. 4 disulfides stabilise this stretch: Cys521–Cys539, Cys527–Cys562, Cys530–Cys546, and Cys542–Cys552. IPT/TIG domains lie at 564–656 (PTIY…FSYV), 658–740 (PIIT…FSYQ), and 743–837 (PIIY…LIYV). An O-linked (Man) threonine glycan is attached at Thr583. 2 N-linked (GlcNAc...) asparagine glycosylation sites follow: Asn608 and Asn636. Residues Thr677 and Thr762 are each glycosylated (O-linked (Man) threonine). Asn786, Asn880, and Asn931 each carry an N-linked (GlcNAc...) asparagine glycan. A helical membrane pass occupies residues 934–956 (EFIVGILSISGILLTLLGLLLWW). The Cytoplasmic segment spans residues 957–1382 (KKKKQIKDLG…QDNFDSEGNT (426 aa)). Ser967 carries the phosphoserine modification. Thr978 carries the phosphothreonine modification. Phosphoserine occurs at positions 991, 998, and 1001. Phosphotyrosine is present on Tyr1004. In terms of domain architecture, Protein kinase spans 1079–1346 (VHFNEVIGRG…RISAIFSTFI (268 aa)). ATP is bound by residues 1085-1093 (IGRGHFGCV) and Lys1111. Residue Asp1205 is the Proton acceptor of the active site. The tract at residues 1213–1382 (LDENFTVKVA…QDNFDSEGNT (170 aa)) is interaction with RANBP9. At Tyr1231 the chain carries Phosphotyrosine. Phosphotyrosine; by autocatalysis is present on residues Tyr1235 and Tyr1236. A Phosphothreonine modification is found at Thr1290. The segment at 1321–1360 (WHPKAELRPSFSELVSRISAIFSTFIGEHYVHVNATYVNI) is interaction with MUC20. Tyr1350 and Tyr1357 each carry phosphotyrosine; by autocatalysis. At Tyr1366 the chain carries Phosphotyrosine.

This sequence belongs to the protein kinase superfamily. Tyr protein kinase family. As to quaternary structure, heterodimer made of an alpha chain (50 kDa) and a beta chain (145 kDa) which are disulfide linked. Binds PLXNB1. Interacts when phosphorylated with downstream effectors including STAT3, PIK3R1, SRC, PCLG1, GRB2 and GAB1. Interacts with SPSB1, SPSB2 and SPSB4. Interacts with INPP5D/SHIP1. When phosphorylated at Tyr-1357, interacts with INPPL1/SHIP2. Interacts with RANBP9 and RANBP10, as well as SPSB1, SPSB2, SPSB3 and SPSB4. SPSB1 binding occurs in the presence and in the absence of HGF, however HGF treatment has a positive effect on this interaction. Interacts with MUC20; prevents interaction with GRB2 and suppresses hepatocyte growth factor-induced cell proliferation. Interacts with GRB10. Interacts with PTPN1 and PTPN2. Interacts with tensin TNS3. Interacts (when phosphorylated) with tensin TNS4 (via SH2 domain); the interaction increases MET protein stability by inhibiting MET endocytosis and subsequent lysosomal degradation. Post-translationally, autophosphorylated in response to ligand binding on Tyr-1235 and Tyr-1236 in the kinase domain leading to further phosphorylation of Tyr-1350 and Tyr-1357 in the C-terminal multifunctional docking site. Dephosphorylated by PTPRJ at Tyr-1350 and Tyr-1366. Dephosphorylated by PTPN1 and PTPN2. Ubiquitinated. Ubiquitination by CBL regulates the receptor stability and activity through proteasomal degradation. In terms of processing, O-mannosylation of IPT/TIG domains by TMEM260 is required for protein maturation. O-mannosylated residues are composed of single mannose glycans that are not elongated or modified.

It localises to the membrane. The enzyme catalyses L-tyrosyl-[protein] + ATP = O-phospho-L-tyrosyl-[protein] + ADP + H(+). With respect to regulation, in its inactive state, the C-terminal tail interacts with the catalytic domain and inhibits the kinase activity. Upon ligand binding, the C-terminal tail is displaced and becomes phosphorylated, thus increasing the kinase activity. Functionally, receptor tyrosine kinase that transduces signals from the extracellular matrix into the cytoplasm by binding to hepatocyte growth factor/HGF ligand. Regulates many physiological processes including proliferation, scattering, morphogenesis and survival. Ligand binding at the cell surface induces autophosphorylation of MET on its intracellular domain that provides docking sites for downstream signaling molecules. Following activation by ligand, interacts with the PI3-kinase subunit PIK3R1, PLCG1, SRC, GRB2, STAT3 or the adapter GAB1. Recruitment of these downstream effectors by MET leads to the activation of several signaling cascades including the RAS-ERK, PI3 kinase-AKT, or PLCgamma-PKC. The RAS-ERK activation is associated with the morphogenetic effects while PI3K/AKT coordinates prosurvival effects. During embryonic development, MET signaling plays a role in gastrulation, development and migration of muscles and neuronal precursors, angiogenesis and kidney formation. In adults, participates in wound healing as well as organ regeneration and tissue remodeling. Also promotes differentiation and proliferation of hematopoietic cells. This Atelerix albiventris (Middle-African hedgehog) protein is Hepatocyte growth factor receptor (MET).